We begin with the raw amino-acid sequence, 697 residues long: Sentrin-specific protease (697 aa).

Positions 1–14 are enriched in basic and acidic residues; it reads MSRRSDLSDKDSQS. 2 disordered regions span residues 1-47 and 365-387; these read MSRR…QGLG and SEES…SDSY. The Nuclear localization signal motif lies at 15-19; the sequence is RKRHW. The Nuclear localization signal signature appears at 462–467; that stretch reads KVEKKK. The protease stretch occupies residues 501–664; the sequence is IQICKKDLAT…VFSCQFGEWA (164 aa). Residues histidine 585, aspartate 602, and cysteine 653 contribute to the active site.

This sequence belongs to the peptidase C48 family.

Its subcellular location is the nucleus envelope. Its function is as follows. Protease that deconjugates smo-1 from targeted proteins and may catalyze the processing of smo-1 to its mature form. This is Sentrin-specific protease (ulp-1) from Caenorhabditis elegans.